Here is a 99-residue protein sequence, read N- to C-terminus: MRIERLYEVVRAPHISEKSTLAAEERNEVVFKVAVDARKAEIRQAVEQLFDVKVRDVRTVKMKGKRKRFGRLEGKRPDWKKAYVTLEEGNEIDFLGGAE.

It belongs to the universal ribosomal protein uL23 family. In terms of assembly, part of the 50S ribosomal subunit. Contacts protein L29, and trigger factor when it is bound to the ribosome.

One of the early assembly proteins it binds 23S rRNA. One of the proteins that surrounds the polypeptide exit tunnel on the outside of the ribosome. Forms the main docking site for trigger factor binding to the ribosome. The chain is Large ribosomal subunit protein uL23 from Alkalilimnicola ehrlichii (strain ATCC BAA-1101 / DSM 17681 / MLHE-1).